The primary structure comprises 223 residues: Prolactin-3D4 (223 aa).

Residues 1–28 (MQLTLTLSGSSMQLLLLVSNLLLWENMA) form the signal peptide. 2 disulfides stabilise this stretch: C80–C198 and C215–C223. Residues N108 and N157 are each glycosylated (N-linked (GlcNAc...) asparagine).

This sequence belongs to the somatotropin/prolactin family. In terms of processing, N-glycosylated.

The protein resides in the secreted. The protein is Prolactin-3D4 (Prl3d4) of Rattus norvegicus (Rat).